Here is a 370-residue protein sequence, read N- to C-terminus: Phospho-2-dehydro-3-deoxyheptonate aldolase, phenylalanine-inhibited (370 aa).

It belongs to the class-I DAHP synthase family.

The enzyme catalyses D-erythrose 4-phosphate + phosphoenolpyruvate + H2O = 7-phospho-2-dehydro-3-deoxy-D-arabino-heptonate + phosphate. It functions in the pathway metabolic intermediate biosynthesis; chorismate biosynthesis; chorismate from D-erythrose 4-phosphate and phosphoenolpyruvate: step 1/7. With respect to regulation, inhibited by phenyalanine. Its function is as follows. Stereospecific condensation of phosphoenolpyruvate (PEP) and D-erythrose-4-phosphate (E4P) giving rise to 3-deoxy-D-arabino-heptulosonate-7-phosphate (DAHP). In Saccharomyces cerevisiae (strain ATCC 204508 / S288c) (Baker's yeast), this protein is Phospho-2-dehydro-3-deoxyheptonate aldolase, phenylalanine-inhibited (ARO3).